The sequence spans 264 residues: Probable glycerophosphodiester phosphodiesterase 2 (264 aa).

The 239-residue stretch at 17 to 255 (RIAMAHRGFT…DRADLLRDVL (239 aa)) folds into the GP-PDE domain. The active-site Proton acceptor is histidine 22. 3 residues coordinate a divalent metal cation: glutamate 50, aspartate 52, and histidine 65. The Proton donor role is filled by histidine 65.

The protein belongs to the glycerophosphoryl diester phosphodiesterase family. A divalent metal cation serves as cofactor.

The enzyme catalyses a sn-glycero-3-phosphodiester + H2O = an alcohol + sn-glycerol 3-phosphate + H(+). In terms of biological role, glycerophosphodiester phosphodiesterase hydrolyzes glycerophosphodiesters into glycerol-3-phosphate (G3P) and the corresponding alcohol. The protein is Probable glycerophosphodiester phosphodiesterase 2 of Mycobacterium tuberculosis (strain ATCC 25618 / H37Rv).